Reading from the N-terminus, the 271-residue chain is Ribosomal RNA small subunit methyltransferase A (271 aa).

Positions 11, 13, 38, 58, 86, and 101 each coordinate S-adenosyl-L-methionine.

It belongs to the class I-like SAM-binding methyltransferase superfamily. rRNA adenine N(6)-methyltransferase family. RsmA subfamily.

Its subcellular location is the cytoplasm. It carries out the reaction adenosine(1518)/adenosine(1519) in 16S rRNA + 4 S-adenosyl-L-methionine = N(6)-dimethyladenosine(1518)/N(6)-dimethyladenosine(1519) in 16S rRNA + 4 S-adenosyl-L-homocysteine + 4 H(+). Its function is as follows. Specifically dimethylates two adjacent adenosines (A1518 and A1519) in the loop of a conserved hairpin near the 3'-end of 16S rRNA in the 30S particle. May play a critical role in biogenesis of 30S subunits. In Helicobacter pylori (strain J99 / ATCC 700824) (Campylobacter pylori J99), this protein is Ribosomal RNA small subunit methyltransferase A.